The primary structure comprises 321 residues: tRNA-dihydrouridine synthase B (321 aa).

FMN is bound by residues 16–18 (PMA) and glutamine 70. Cysteine 100 functions as the Proton donor in the catalytic mechanism. FMN contacts are provided by residues lysine 139, 200-202 (NGD), and 224-225 (GR).

This sequence belongs to the Dus family. DusB subfamily. It depends on FMN as a cofactor.

It carries out the reaction a 5,6-dihydrouridine in tRNA + NAD(+) = a uridine in tRNA + NADH + H(+). The catalysed reaction is a 5,6-dihydrouridine in tRNA + NADP(+) = a uridine in tRNA + NADPH + H(+). In terms of biological role, catalyzes the synthesis of 5,6-dihydrouridine (D), a modified base found in the D-loop of most tRNAs, via the reduction of the C5-C6 double bond in target uridines. The sequence is that of tRNA-dihydrouridine synthase B from Klebsiella pneumoniae.